We begin with the raw amino-acid sequence, 291 residues long: Ribosome biogenesis protein BRX1 (291 aa).

Residues Gln-31 to Gly-232 form the Brix domain. Residue Ser-285 is modified to Phosphoserine.

This sequence belongs to the BRX1 family. As to quaternary structure, part of a complex that includes BRX1, RPF1, RPF2 and SSF1 or SSF2.

It localises to the nucleus. The protein localises to the nucleolus. In terms of biological role, required for biogenesis of the 60S ribosomal subunit. The sequence is that of Ribosome biogenesis protein BRX1 (BRX1) from Saccharomyces cerevisiae (strain ATCC 204508 / S288c) (Baker's yeast).